Reading from the N-terminus, the 77-residue chain is U8-lycotoxin-Ls1t (77 aa).

Residues 1–20 (MKLIIFTGLVLFAIVSLIEA) form the signal peptide. A propeptide spanning residues 21 to 26 (QAENEK) is cleaved from the precursor.

Belongs to the neurotoxin 19 (CSTX) family. 08 (U8-Lctx) subfamily. Contains 4 disulfide bonds. As to expression, expressed by the venom gland.

The protein localises to the secreted. The chain is U8-lycotoxin-Ls1t from Lycosa singoriensis (Wolf spider).